Reading from the N-terminus, the 406-residue chain is Argininosuccinate synthase (406 aa).

ATP-binding positions include alanine 11–serine 19 and alanine 38. Residues tyrosine 91 and serine 96 each coordinate L-citrulline. Glycine 121 is a binding site for ATP. L-aspartate is bound by residues threonine 123, asparagine 127, and aspartate 128. Asparagine 127 is an L-citrulline binding site. L-citrulline-binding residues include arginine 131, serine 181, serine 190, glutamate 266, and tyrosine 278.

This sequence belongs to the argininosuccinate synthase family. Type 1 subfamily. As to quaternary structure, homotetramer.

It localises to the cytoplasm. It catalyses the reaction L-citrulline + L-aspartate + ATP = 2-(N(omega)-L-arginino)succinate + AMP + diphosphate + H(+). Its pathway is amino-acid biosynthesis; L-arginine biosynthesis; L-arginine from L-ornithine and carbamoyl phosphate: step 2/3. The chain is Argininosuccinate synthase from Campylobacter hominis (strain ATCC BAA-381 / DSM 21671 / CCUG 45161 / LMG 19568 / NCTC 13146 / CH001A).